Reading from the N-terminus, the 352-residue chain is Putative conjugal transfer protein MT3759 (352 aa).

160–167 (GGTGAGKT) contributes to the ATP binding site.

Belongs to the GSP E family.

It localises to the cytoplasm. The sequence is that of Putative conjugal transfer protein MT3759 from Mycobacterium tuberculosis (strain CDC 1551 / Oshkosh).